Consider the following 1025-residue polypeptide: Synapsin (1025 aa).

Disordered stretches follow at residues 1-94 (MKRG…SRES), 439-784 (VCRP…NYGS), 872-910 (YDSN…KHSD), and 995-1025 (DFSD…LDLK). Residues 34–52 (TKPPVAGGPPNMPPPPAPG) are compositionally biased toward pro residues. Low complexity predominate over residues 454-463 (SRSSVSSRAE). The span at 472-492 (PTPPLPAGPRPAPMGGPPPIP) shows a compositional bias: pro residues. Composition is skewed to low complexity over residues 499–546 (VGSI…SSVS) and 594–626 (SETS…QFSF). Phosphoserine is present on Ser539. Positions 651–673 (TTASSAVRPESSVSVSDSRNTDT) are enriched in polar residues. The span at 690–702 (QQERVNPFDKEPS) shows a compositional bias: basic and acidic residues. Residues 703–725 (KSGSAASIHTSSSSSISSSSISS) are compositionally biased toward low complexity. A compositionally biased stretch (polar residues) spans 726 to 735 (RINRNGNAIQ). Residues 736 to 749 (SPPPPAGPPPPPPT) show a composition bias toward pro residues. Over residues 750-759 (NVTAVGSNAN) the composition is skewed to polar residues. A compositionally biased stretch (low complexity) spans 760–772 (SSSGYRNSFSSSL). Residues 872–904 (YDSNSIASQGEGLNNPSDLPSYTRPSYSRSESN) are compositionally biased toward polar residues. Residues 995–1007 (DFSDSGSMSSIGS) are compositionally biased toward low complexity.

It belongs to the synapsin family. In terms of assembly, identified in a complex with Syt1 and nwk. As to expression, widely expressed in the embryonic and adult nervous system synaptic terminals.

The protein localises to the synapse. In terms of biological role, plays a significant role in nervous system function, which is subtle at the cellular level but manifests itself in complex behavior. This Drosophila melanogaster (Fruit fly) protein is Synapsin (Syn).